The chain runs to 49 residues: Large ribosomal subunit protein bL33B (49 aa).

The protein belongs to the bacterial ribosomal protein bL33 family.

In Latilactobacillus sakei subsp. sakei (strain 23K) (Lactobacillus sakei subsp. sakei), this protein is Large ribosomal subunit protein bL33B.